Here is an 842-residue protein sequence, read N- to C-terminus: Leucine--tRNA ligase (842 aa).

The short motif at 62–72 (PYPSGDLHMGH) is the 'HIGH' region element. The interval 390 to 414 (GDEDPAETGVATAGEGTLKNSGELD) is disordered. A 'KMSKS' region motif is present at residues 607–611 (AMSKS). Residue Lys610 participates in ATP binding.

This sequence belongs to the class-I aminoacyl-tRNA synthetase family.

It is found in the cytoplasm. It catalyses the reaction tRNA(Leu) + L-leucine + ATP = L-leucyl-tRNA(Leu) + AMP + diphosphate. The protein is Leucine--tRNA ligase of Paenarthrobacter aurescens (strain TC1).